The primary structure comprises 64 residues: Toxin BmKIT3 (64 aa).

Residues 1–61 enclose the LCN-type CS-alpha/beta domain; sequence DGYIRGSNGC…TWKSESNTCG (61 aa). Cystine bridges form between Cys-10/Cys-60, Cys-14/Cys-35, Cys-21/Cys-42, and Cys-25/Cys-44. The residue at position 60 (Cys-60) is a Cysteine amide.

Belongs to the long (4 C-C) scorpion toxin superfamily. Sodium channel inhibitor family. Beta subfamily. Expressed by the venom gland.

It is found in the secreted. Functionally, depressant insect beta-toxins cause a transient contraction paralysis followed by a slow flaccid paralysis. They bind voltage-independently at site-4 of sodium channels (Nav) and shift the voltage of activation toward more negative potentials thereby affecting sodium channel activation and promoting spontaneous and repetitive firing. This Olivierus martensii (Manchurian scorpion) protein is Toxin BmKIT3.